A 384-amino-acid chain; its full sequence is Guanine nucleotide-binding protein alpha-1 subunit (384 aa).

The disordered stretch occupies residues 1–22 (MGSLCSRNKHYSQADDEENTQT). A lipid anchor (N-myristoyl glycine) is attached at G2. A lipid anchor (S-palmitoyl cysteine) is attached at C5. A G-alpha domain is found at 38–384 (HIQKLLLLGA…RRNLFEAGLL (347 aa)). Residues 41-54 (KLLLLGAGDSGKST) form a G1 motif region. Positions 49, 50, 51, 52, 53, 54, 163, 188, 194, 222, 288, 289, 291, and 356 each coordinate GTP. S53 lines the Mg(2+) pocket. The G2 motif stretch occupies residues 186–194 (DVLFARIRT). Mg(2+) is bound at residue T194. The G3 motif stretch occupies residues 215-224 (YRLFDVGGQR). The segment at 284 to 291 (MLFLNKFD) is G4 motif. A G5 motif region spans residues 354–359 (TTALDQ).

The protein belongs to the G-alpha family. G proteins are composed of 3 units; alpha, beta and gamma. The alpha chain contains the guanine nucleotide binding site. Mg(2+) serves as cofactor.

In terms of biological role, guanine nucleotide-binding proteins (G proteins) are involved as modulators or transducers in various transmembrane signaling systems. The polypeptide is Guanine nucleotide-binding protein alpha-1 subunit (GPA1) (Solanum lycopersicum (Tomato)).